The primary structure comprises 105 residues: Large ribosomal subunit protein eL42 (105 aa).

Residues 28 to 57 (YKKGKDSLAAQGKRRYDRKQSGYGGQTKPV) are disordered.

It belongs to the eukaryotic ribosomal protein eL42 family.

The chain is Large ribosomal subunit protein eL42 (RPL44) from Gossypium hirsutum (Upland cotton).